Here is an 856-residue protein sequence, read N- to C-terminus: Lon protease homolog 2, peroxisomal (856 aa).

The Lon N-terminal domain occupies 13 to 222; it reads LPLLLTHEGV…VTIPLLLRQI (210 aa). 379–386 contacts ATP; that stretch reads GPPGVGKT. A compositionally biased stretch (basic and acidic residues) spans 586-608; that stretch reads GQHREHKSEHLEAPEGEERKESV. The disordered stretch occupies residues 586-614; it reads GQHREHKSEHLEAPEGEERKESVPEGSKS. Residues 655–841 enclose the Lon proteolytic domain; the sequence is LNQPGVAIGL…DEVLNAAFDG (187 aa). Residues Ser747 and Lys790 contribute to the active site. Residues 854-856 carry the Microbody targeting signal motif; it reads SKL.

The protein belongs to the peptidase S16 family.

It localises to the peroxisome matrix. It catalyses the reaction Hydrolysis of proteins in presence of ATP.. Its function is as follows. ATP-dependent serine protease that mediates the selective degradation of misfolded and unassembled polypeptides in the peroxisomal matrix. Necessary for type 2 peroxisome targeting signal (PTS2)-containing protein processing and facilitates peroxisome matrix protein import. The sequence is that of Lon protease homolog 2, peroxisomal (lonp2) from Xenopus laevis (African clawed frog).